A 513-amino-acid chain; its full sequence is ATP synthase subunit alpha (513 aa).

169–176 contributes to the ATP binding site; sequence GDRQTGKT.

The protein belongs to the ATPase alpha/beta chains family. As to quaternary structure, F-type ATPases have 2 components, CF(1) - the catalytic core - and CF(0) - the membrane proton channel. CF(1) has five subunits: alpha(3), beta(3), gamma(1), delta(1), epsilon(1). CF(0) has three main subunits: a(1), b(2) and c(9-12). The alpha and beta chains form an alternating ring which encloses part of the gamma chain. CF(1) is attached to CF(0) by a central stalk formed by the gamma and epsilon chains, while a peripheral stalk is formed by the delta and b chains.

It localises to the cell inner membrane. It carries out the reaction ATP + H2O + 4 H(+)(in) = ADP + phosphate + 5 H(+)(out). Functionally, produces ATP from ADP in the presence of a proton gradient across the membrane. The alpha chain is a regulatory subunit. This is ATP synthase subunit alpha from Shigella boydii serotype 18 (strain CDC 3083-94 / BS512).